The primary structure comprises 302 residues: Bifunctional protein FolD (302 aa).

Residues 165–167 (GRS), Ser-190, and Ile-231 contribute to the NADP(+) site.

Belongs to the tetrahydrofolate dehydrogenase/cyclohydrolase family. Homodimer.

It catalyses the reaction (6R)-5,10-methylene-5,6,7,8-tetrahydrofolate + NADP(+) = (6R)-5,10-methenyltetrahydrofolate + NADPH. The catalysed reaction is (6R)-5,10-methenyltetrahydrofolate + H2O = (6R)-10-formyltetrahydrofolate + H(+). Its pathway is one-carbon metabolism; tetrahydrofolate interconversion. Functionally, catalyzes the oxidation of 5,10-methylenetetrahydrofolate to 5,10-methenyltetrahydrofolate and then the hydrolysis of 5,10-methenyltetrahydrofolate to 10-formyltetrahydrofolate. This is Bifunctional protein FolD from Prochlorococcus marinus (strain SARG / CCMP1375 / SS120).